A 153-amino-acid chain; its full sequence is Small heat shock protein HspB (153 aa).

The sHSP domain maps to A30–S140.

Belongs to the small heat shock protein (HSP20) family.

The polypeptide is Small heat shock protein HspB (hspB) (Bradyrhizobium diazoefficiens (strain JCM 10833 / BCRC 13528 / IAM 13628 / NBRC 14792 / USDA 110)).